A 70-amino-acid polypeptide reads, in one-letter code: Small ribosomal subunit protein bS21A (70 aa).

The protein belongs to the bacterial ribosomal protein bS21 family.

The polypeptide is Small ribosomal subunit protein bS21A (Burkholderia orbicola (strain AU 1054)).